The following is a 252-amino-acid chain: Type III pantothenate kinase (252 aa).

6–13 is an ATP binding site; sequence DIGNTTTE. Residues tyrosine 100 and 107–110 each bind substrate; that span reads GADR. Catalysis depends on aspartate 109, which acts as the Proton acceptor. Aspartate 129 contacts K(+). An ATP-binding site is contributed by threonine 132. Threonine 184 contributes to the substrate binding site.

It belongs to the type III pantothenate kinase family. As to quaternary structure, homodimer. Requires NH4(+) as cofactor. It depends on K(+) as a cofactor.

It is found in the cytoplasm. The catalysed reaction is (R)-pantothenate + ATP = (R)-4'-phosphopantothenate + ADP + H(+). It participates in cofactor biosynthesis; coenzyme A biosynthesis; CoA from (R)-pantothenate: step 1/5. Functionally, catalyzes the phosphorylation of pantothenate (Pan), the first step in CoA biosynthesis. The protein is Type III pantothenate kinase of Sulfurihydrogenibium sp. (strain YO3AOP1).